The sequence spans 89 residues: Small ribosomal subunit protein uS14 (89 aa).

It belongs to the universal ribosomal protein uS14 family. Part of the 30S ribosomal subunit. Contacts proteins S3 and S10.

In terms of biological role, binds 16S rRNA, required for the assembly of 30S particles and may also be responsible for determining the conformation of the 16S rRNA at the A site. The polypeptide is Small ribosomal subunit protein uS14 (Porphyromonas gingivalis (strain ATCC 33277 / DSM 20709 / CIP 103683 / JCM 12257 / NCTC 11834 / 2561)).